The sequence spans 145 residues: Ribosome maturation factor RimP (145 aa).

It belongs to the RimP family.

Its subcellular location is the cytoplasm. Its function is as follows. Required for maturation of 30S ribosomal subunits. This is Ribosome maturation factor RimP from Borreliella burgdorferi (strain ATCC 35210 / DSM 4680 / CIP 102532 / B31) (Borrelia burgdorferi).